Consider the following 366-residue polypeptide: RNA 3'-terminal phosphate cyclase (366 aa).

Residues Q104, P131, Y294, D297, Q298, and H320 each coordinate ATP. H320 (tele-AMP-histidine intermediate) is an active-site residue.

This sequence belongs to the RNA 3'-terminal cyclase family. Type 1 subfamily.

It is found in the nucleus. It localises to the nucleoplasm. It catalyses the reaction a 3'-end 3'-phospho-ribonucleotide-RNA + ATP = a 3'-end 2',3'-cyclophospho-ribonucleotide-RNA + AMP + diphosphate. Catalyzes the conversion of 3'-phosphate to a 2',3'-cyclic phosphodiester at the end of RNA. The mechanism of action of the enzyme occurs in 3 steps: (A) adenylation of the enzyme by ATP; (B) transfer of adenylate to an RNA-N3'P to produce RNA-N3'PP5'A; (C) and attack of the adjacent 2'-hydroxyl on the 3'-phosphorus in the diester linkage to produce the cyclic end product. Likely functions in some aspects of cellular RNA processing. Function plays an important role in regulating axon regeneration by inhibiting central nervous system (CNS) axon regeneration following optic nerve injury. In Bos taurus (Bovine), this protein is RNA 3'-terminal phosphate cyclase (RTCA).